The sequence spans 701 residues: DNA-directed RNA polymerase subunit beta' (701 aa).

Residues Cys76, Cys78, Cys94, and Cys97 each contribute to the Zn(2+) site. 3 residues coordinate Mg(2+): Asp511, Asp513, and Asp515.

It belongs to the RNA polymerase beta' chain family. RpoC1 subfamily. In plastids the minimal PEP RNA polymerase catalytic core is composed of four subunits: alpha, beta, beta', and beta''. When a (nuclear-encoded) sigma factor is associated with the core the holoenzyme is formed, which can initiate transcription. It depends on Mg(2+) as a cofactor. Zn(2+) is required as a cofactor.

Its subcellular location is the plastid. It is found in the chloroplast. It catalyses the reaction RNA(n) + a ribonucleoside 5'-triphosphate = RNA(n+1) + diphosphate. In terms of biological role, DNA-dependent RNA polymerase catalyzes the transcription of DNA into RNA using the four ribonucleoside triphosphates as substrates. The sequence is that of DNA-directed RNA polymerase subunit beta' from Pelargonium hortorum (Common geranium).